We begin with the raw amino-acid sequence, 84 residues long: Small ribosomal subunit protein uS17 (84 aa).

The protein belongs to the universal ribosomal protein uS17 family. In terms of assembly, part of the 30S ribosomal subunit.

In terms of biological role, one of the primary rRNA binding proteins, it binds specifically to the 5'-end of 16S ribosomal RNA. The protein is Small ribosomal subunit protein uS17 of Clostridium botulinum (strain ATCC 19397 / Type A).